A 488-amino-acid polypeptide reads, in one-letter code: Beta-amylase (488 aa).

Residues D51, H91, and D99 each contribute to the substrate site. Catalysis depends on E184, which acts as the Proton donor. Substrate is bound by residues K293, H298, and T340. Catalysis depends on E378, which acts as the Proton acceptor. Substrate is bound by residues 379-380 (NA) and R418.

The protein belongs to the glycosyl hydrolase 14 family.

It catalyses the reaction Hydrolysis of (1-&gt;4)-alpha-D-glucosidic linkages in polysaccharides so as to remove successive maltose units from the non-reducing ends of the chains.. This Zea mays (Maize) protein is Beta-amylase (BMY1).